A 345-amino-acid chain; its full sequence is GTP 3',8-cyclase (345 aa).

In terms of domain architecture, Radical SAM core spans Ser10 to Asp236. GTP is bound at residue Arg19. [4Fe-4S] cluster contacts are provided by Cys26 and Cys30. Tyr32 contributes to the S-adenosyl-L-methionine binding site. Cys33 is a binding site for [4Fe-4S] cluster. Position 65 (Arg65) interacts with GTP. Gly69 serves as a coordination point for S-adenosyl-L-methionine. Residue Thr98 coordinates GTP. Ser123 is an S-adenosyl-L-methionine binding site. Lys172 contributes to the GTP binding site. Met206 contacts S-adenosyl-L-methionine. Residues Cys269 and Cys272 each coordinate [4Fe-4S] cluster. Residue Arg274 to Arg276 coordinates GTP. Cys286 is a [4Fe-4S] cluster binding site.

It belongs to the radical SAM superfamily. MoaA family. In terms of assembly, monomer and homodimer. The cofactor is [4Fe-4S] cluster.

It carries out the reaction GTP + AH2 + S-adenosyl-L-methionine = (8S)-3',8-cyclo-7,8-dihydroguanosine 5'-triphosphate + 5'-deoxyadenosine + L-methionine + A + H(+). It functions in the pathway cofactor biosynthesis; molybdopterin biosynthesis. In terms of biological role, catalyzes the cyclization of GTP to (8S)-3',8-cyclo-7,8-dihydroguanosine 5'-triphosphate. This chain is GTP 3',8-cyclase, found in Synechococcus sp. (strain CC9902).